Reading from the N-terminus, the 1023-residue chain is Vacuolar membrane protease (1023 aa).

The Cytoplasmic portion of the chain corresponds to 1 to 80 (MRAAGCGGTG…FFRSVFGYRK (80 aa)). Polar residues predominate over residues 17–48 (KLSRSISQHQPKSMPQASVNSEQNPSVPNSPS). The segment at 17–59 (KLSRSISQHQPKSMPQASVNSEQNPSVPNSPSAHKPARSQSAQ) is disordered. The helical transmembrane segment at 81 to 101 (TSLTFLVALVFAATLLLSWAD) threads the bilayer. At 102–425 (SSLDFSVDMP…VVFSVSQVVS (324 aa)) the chain is on the vacuolar side. N-linked (GlcNAc...) asparagine glycans are attached at residues Asn170 and Asn200. The Zn(2+) site is built by His214 and Asp226. Glu259 acts as the Proton acceptor in catalysis. Zn(2+) contacts are provided by Glu260, Glu285, and His357. Residues 426 to 446 (ANIALLVVVPVASLLLLFIIF) form a helical membrane-spanning segment. At 447-461 (RCNKGWGFNFVNAIK) the chain is on the cytoplasmic side. The helical transmembrane segment at 462-482 (YPLSLVASVLVLTFVSQVIIV) threads the bilayer. Over 483-491 (PSNPFLVNS) the chain is Vacuolar. N-linked (GlcNAc...) asparagine glycosylation occurs at Asn490. The chain crosses the membrane as a helical span at residues 492–512 (SIGLLVATLFSLFLLLNYIVL). At 513 to 529 (NGLNLVFKSFKGHQHDE) the chain is on the cytoplasmic side. A helical transmembrane segment spans residues 530 to 550 (KLIVMCESSFLTWILLLWSTV). Residues 551–564 (KLSHNKFGDDHTGE) are Vacuolar-facing. Residues 565–585 (LFIPILFSLQAVACFLGFLGW) traverse the membrane as a helical segment. Residues 586-643 (CFKPSKKVKVSREEHQPLLSSNGSNYGTQDDDDSLAPSSSLSLQSGFSENCEVHETKS) are Cytoplasmic-facing. Over residues 604 to 613 (LSSNGSNYGT) the composition is skewed to polar residues. A disordered region spans residues 604–626 (LSSNGSNYGTQDDDDSLAPSSSL). Residues 644–664 (FSYDWLVQFLVIVPISSLIIF) traverse the membrane as a helical segment. Topologically, residues 665–687 (NSGSLILNGLNKSIQESLSAQNL) are vacuolar. Asn675 is a glycosylation site (N-linked (GlcNAc...) asparagine). A helical transmembrane segment spans residues 688 to 708 (IYKFIQIFVIVWSIPFLPFIF). The Cytoplasmic portion of the chain corresponds to 709 to 712 (KLNR). The chain crosses the membrane as a helical span at residues 713–733 (IIVLALSLVLLYGFFAVNITD). At 734-1023 (AFNDANPLKL…MVSVTKYIEV (290 aa)) the chain is on the vacuolar side. Asn815, Asn858, and Asn892 each carry an N-linked (GlcNAc...) asparagine glycan.

This sequence belongs to the peptidase M28 family. The cofactor is Zn(2+).

Its subcellular location is the vacuole membrane. May be involved in vacuolar sorting and osmoregulation. The polypeptide is Vacuolar membrane protease (Clavispora lusitaniae (strain ATCC 42720) (Yeast)).